Consider the following 473-residue polypeptide: MKPMTLPELTQEYILTHDLRPDTVKIYRAATKAYVNFFGECLACETTHRDMLEWRRSELARISKRSWNTYSSHLRTVYRYAMEHGLVELKVNPLKDTRVMPTKRPKKTIGNDVIVRARNWLRFLVQEELSTGKRSEITPAWFWLAVFETFYYTGIRLNALLCLRYENVDLGQRLIRVRGETEKTHREFMIPIPDGLMPHLVLVMDTAKKVGFSGTDQVFNINRFSGHYKREYMNSDQVEAMYKKLTNMTGTRMTPHRFRHTIASELMRQPERNIHITKNLLNHSNIATTMEYIEPDYDLMREVMNERGQQQAKINYLVRPIIPKSSGPAAGSAVPRVSLVSGTELQPATTESSEAKKADDTASNPPVAERLELMSTAPLVNVLKSTPVSVHSEPVTSNEAKAQALSLISDAPETEYEFGELEDIARWIRENAAGEMVVQIAAEEDIGTISEGKASIQSPDGYYRIPWSSGSVK.

One can recognise a Core-binding (CB) domain in the interval 4 to 82 (MTLPELTQEY…HLRTVYRYAM (79 aa)). Residues 118–305 (RNWLRFLVQE…DYDLMREVMN (188 aa)) enclose the Tyr recombinase domain. Catalysis depends on residues arginine 156, lysine 183, histidine 256, arginine 259, and histidine 283. The active-site O-(3'-phospho-DNA)-tyrosine intermediate is the tyrosine 292. Over residues 341–352 (SGTELQPATTES) the composition is skewed to polar residues. Residues 341–365 (SGTELQPATTESSEAKKADDTASNP) are disordered.

Belongs to the 'phage' integrase family.

It is found in the cytoplasm. Its function is as follows. Site-specific tyrosine recombinase, which acts by catalyzing the cutting and rejoining of the recombining DNA molecules. This chain is Putative tyrosine recombinase XerC, found in Pseudomonas syringae.